Here is a 245-residue protein sequence, read N- to C-terminus: Nodulation protein G (245 aa).

11 to 35 (VTGASGGIGEAIARVLHAQGAIVGL) contacts NAD(+). Ser-139 is a binding site for substrate. The active-site Proton acceptor is the Tyr-152.

Belongs to the short-chain dehydrogenases/reductases (SDR) family.

Its function is as follows. Proposed to modify Nod factor fatty acyl chain. This chain is Nodulation protein G (nodG), found in Rhizobium sp. (strain N33).